A 369-amino-acid polypeptide reads, in one-letter code: MAQGWAGFSEEELRRLKQTKDPFEPQRRLPAKKSRQQLQREKALVEQSQKLGLQDGSTSLLPEQLLSAPKQRVNVQKPPFSSPTLPSHFTLTSPVGDGQPQGIESQPKELGLENSHDGHNNVEILPPKPDCKLEKKKVELQEKSRWEVLQQEQRLMEEKNKRKKALLAKAIAERSKRTQAETMKLKRIQKELQALDDMVSADIGILRNRIDQASLDYSYARKRFDRAEAEYIAAKLDIQRKTEIKEQLTEHLCTIIQQNELRKAKKLEELMQQLDVEADEETLELEVEVERLLHEQEVESRRPVVRLERPFQPAEESVTLEFAKENRKCQEQAVSPKVDDQCGNSSSIPFLSPNCPNQEGNDISAALAT.

The disordered stretch occupies residues 1–128; sequence MAQGWAGFSE…HNNVEILPPK (128 aa). The span at 11–27 shows a compositional bias: basic and acidic residues; that stretch reads EELRRLKQTKDPFEPQR. Composition is skewed to polar residues over residues 46–61 and 82–93; these read EQSQ…TSLL and SPTLPSHFTLTS. Residues 106–120 are compositionally biased toward basic and acidic residues; sequence QPKELGLENSHDGHN. Positions 145-297 form a coiled coil; sequence RWEVLQQEQR…EVERLLHEQE (153 aa). The tract at residues 188 to 369 is necessary for interaction with RCHY1; that stretch reads IQKELQALDD…GNDISAALAT (182 aa). The segment at 334-369 is disordered; sequence VSPKVDDQCGNSSSIPFLSPNCPNQEGNDISAALAT. Residues 342 to 361 show a composition bias toward polar residues; that stretch reads CGNSSSIPFLSPNCPNQEGN.

The protein belongs to the GORAB family. Interacts with SCYL1. Interacts with RCHY1 and RAB6A/RAB6.

It is found in the cytoplasm. It localises to the golgi apparatus. The polypeptide is RAB6-interacting golgin (GORAB) (Homo sapiens (Human)).